Consider the following 123-residue polypeptide: Large ribosomal subunit protein eL8 (123 aa).

Belongs to the eukaryotic ribosomal protein eL8 family. As to quaternary structure, part of the 50S ribosomal subunit. Probably part of the RNase P complex.

It localises to the cytoplasm. Functionally, multifunctional RNA-binding protein that recognizes the K-turn motif in ribosomal RNA, the RNA component of RNase P, box H/ACA, box C/D and box C'/D' sRNAs. The chain is Large ribosomal subunit protein eL8 from Methanothermobacter thermautotrophicus (strain ATCC 29096 / DSM 1053 / JCM 10044 / NBRC 100330 / Delta H) (Methanobacterium thermoautotrophicum).